The chain runs to 1681 residues: Probable clathrin heavy chain 1 (1681 aa).

7 WD40-like repeat regions span residues 22–65 (NITF…RPIS), 66–105 (ADSVIMHPTAKILALKSGKTLQIFNIELKAKVKAHQNVED), 106–147 (VVYW…QSLA), 148–193 (GTQI…QPIE), 194–255 (GHAA…ADTA), 256–299 (GDFP…ISTD), and 300–328 (TVFVTCEYTATGGIMGINRKGQVLSVSID). CHCR repeat units follow at residues 539-685 (SENG…QVVV), 688-830 (ASKY…SEDA), 835-974 (IINT…QLID), 981-1126 (LSET…VKEA), 1130-1271 (FIKA…FRLA), 1276-1422 (LHIV…LLLN), and 1425-1568 (LTVL…YDCF). Over residues 1616–1628 (ERSEHERKEEKAE) the composition is skewed to basic and acidic residues. The segment at 1616–1635 (ERSEHERKEEKAEQQQNNGM) is disordered.

This sequence belongs to the clathrin heavy chain family. As to quaternary structure, clathrin triskelions, composed of 3 heavy chains and 3 light chains, are the basic subunits of the clathrin coat. May interact with beta arrestin arr-1.

The protein resides in the cytoplasmic vesicle membrane. It localises to the membrane. It is found in the coated pit. Functionally, clathrin is the major protein of the polyhedral coat of coated pits and vesicles. May play a role in yolk protein clatherin-mediated endocytosis by oocytes during oogenesis. This is Probable clathrin heavy chain 1 (chc-1) from Caenorhabditis elegans.